We begin with the raw amino-acid sequence, 350 residues long: MLQRAEPQDFERVLSSMCTVPHPSAREAAERFLATNPGDPGTYETIAGLEREAVEYLGDITGLSDPAGYVASGGTEANLQAIRIARNRADTDDPNVVAPVHAHFSFTKAADVLGVELRTAPAADYRVNMAAMAELVDEDTVCVVGVAGSTEYGYVDPIPAIADLAETVDALCHVDAAWGGFYLPFTDHDWHFGHADIDTMTIDPHKVGQAAVPAGGLLARDRTLLDELAVETPYLESTDQLTLTGTRSGAGVASAVAAMESLWPAGYRQQYETSMANADWLADQLSARGHDVVGPELPLVAADLSMPMTDELRDRGWRVSKTGAGEMRVVCMPHVTRSMLRSFVADLDWY.

Lys-206 carries the post-translational modification N6-(pyridoxal phosphate)lysine.

The protein belongs to the group II decarboxylase family. MfnA subfamily. Pyridoxal 5'-phosphate is required as a cofactor.

It catalyses the reaction L-aspartate + H(+) = beta-alanine + CO2. The protein operates within cofactor biosynthesis; coenzyme A biosynthesis. Its function is as follows. Catalyzes the decarboxylation of L-aspartate to produce beta-alanine. The chain is Probable L-aspartate decarboxylase from Haloarcula marismortui (strain ATCC 43049 / DSM 3752 / JCM 8966 / VKM B-1809) (Halobacterium marismortui).